A 156-amino-acid chain; its full sequence is 3-hydroxyacyl-[acyl-carrier-protein] dehydratase FabZ (156 aa).

Histidine 57 is an active-site residue.

This sequence belongs to the thioester dehydratase family. FabZ subfamily.

It localises to the cytoplasm. The catalysed reaction is a (3R)-hydroxyacyl-[ACP] = a (2E)-enoyl-[ACP] + H2O. Its function is as follows. Involved in unsaturated fatty acids biosynthesis. Catalyzes the dehydration of short chain beta-hydroxyacyl-ACPs and long chain saturated and unsaturated beta-hydroxyacyl-ACPs. This is 3-hydroxyacyl-[acyl-carrier-protein] dehydratase FabZ from Anaeromyxobacter dehalogenans (strain 2CP-1 / ATCC BAA-258).